A 675-amino-acid polypeptide reads, in one-letter code: Methionine--tRNA ligase (675 aa).

The 'HIGH' region signature appears at 15–25 (PYANGSIHLGH). 4 residues coordinate Zn(2+): Cys-146, Cys-149, Cys-159, and Cys-162. A 'KMSKS' region motif is present at residues 332–336 (KMSKS). Lys-335 lines the ATP pocket. The tRNA-binding domain maps to 573–675 (DFAKVDMRIA…SGAQPGMQVK (103 aa)).

This sequence belongs to the class-I aminoacyl-tRNA synthetase family. MetG type 1 subfamily. In terms of assembly, homodimer. Zn(2+) serves as cofactor.

It is found in the cytoplasm. The enzyme catalyses tRNA(Met) + L-methionine + ATP = L-methionyl-tRNA(Met) + AMP + diphosphate. Functionally, is required not only for elongation of protein synthesis but also for the initiation of all mRNA translation through initiator tRNA(fMet) aminoacylation. The sequence is that of Methionine--tRNA ligase from Yersinia pseudotuberculosis serotype O:3 (strain YPIII).